The sequence spans 131 residues: Conotoxin Cal8.2 (131 aa).

Residues 1–19 form the signal peptide; the sequence is MKLLLTLLLGSALMCITLA. Positions 20–38 are excised as a propeptide; sequence DECGLGTHRPVKEVIDNVR.

Contains 4 disulfide bonds. In terms of tissue distribution, expressed by the venom duct.

Its subcellular location is the secreted. Its function is as follows. Probable neurotoxin with unknown target. Possibly targets ion channels. The protein is Conotoxin Cal8.2 of Californiconus californicus (California cone).